Here is a 796-residue protein sequence, read N- to C-terminus: Nuclear GTPase SLIP-GC (796 aa).

Residues M1–E22 are compositionally biased toward basic and acidic residues. The segment at M1–R35 is disordered. G107–S114 contributes to the GTP binding site. 2 coiled-coil regions span residues S158–D185 and K745–K775.

As to expression, expressed in germinal center B-cell and in lymphomas derived from germinal center B-cell.

Its subcellular location is the nucleus speckle. Its function is as follows. Nuclear GTPase found in germinal center B-cells, where it may inhibit function of the activation-induced cytidine deaminase AICDA. Reduces somatic hypermutation in B-cells which may enhance genome stability. The chain is Nuclear GTPase SLIP-GC (NUGGC) from Homo sapiens (Human).